We begin with the raw amino-acid sequence, 370 residues long: Mitogen-activated protein kinase mpkC (370 aa).

The 280-residue stretch at 19–298 (YANVRPVGLG…AAESLEHPYL (280 aa)) folds into the Protein kinase domain. ATP is bound by residues 25-33 (VGLGAFGLV) and Lys48. The Proton acceptor role is filled by Asp140. Thr170 carries the post-translational modification Phosphothreonine. The short motif at 170–172 (TGY) is the TXY element. Tyr172 carries the phosphotyrosine modification.

Belongs to the protein kinase superfamily. Ser/Thr protein kinase family. MAP kinase subfamily. HOG1 sub-subfamily. Mg(2+) serves as cofactor. Dually phosphorylated on Thr-170 and Tyr-172, which activates the enzyme.

It carries out the reaction L-seryl-[protein] + ATP = O-phospho-L-seryl-[protein] + ADP + H(+). The enzyme catalyses L-threonyl-[protein] + ATP = O-phospho-L-threonyl-[protein] + ADP + H(+). Activated by tyrosine and threonine phosphorylation. Mitogen-activated protein kinase required for growth on media where sorbitol or mannitol is the sole carbon source. The sequence is that of Mitogen-activated protein kinase mpkC (mpkC) from Aspergillus terreus (strain NIH 2624 / FGSC A1156).